A 691-amino-acid chain; its full sequence is Glycine--tRNA ligase beta subunit (691 aa).

It belongs to the class-II aminoacyl-tRNA synthetase family. As to quaternary structure, tetramer of two alpha and two beta subunits.

Its subcellular location is the cytoplasm. The catalysed reaction is tRNA(Gly) + glycine + ATP = glycyl-tRNA(Gly) + AMP + diphosphate. This Limosilactobacillus reuteri (strain DSM 20016) (Lactobacillus reuteri) protein is Glycine--tRNA ligase beta subunit.